We begin with the raw amino-acid sequence, 43 residues long: Oxygen-evolving enhancer protein 2 (43 aa).

It belongs to the PsbP family.

The protein resides in the plastid. It localises to the chloroplast thylakoid membrane. In terms of biological role, may be involved in the regulation of photosystem II. This chain is Oxygen-evolving enhancer protein 2, found in Physcomitrium patens (Spreading-leaved earth moss).